The following is a 975-amino-acid chain: Protein cramped (975 aa).

Disordered stretches follow at residues 1-37 (MEELCKQPPPPPPLPPPPSSPSVAIEDPLPNGKGGGA), 71-111 (QKMK…GSGK), 318-346 (AIFPSSLPSTATNNNNNNNETEPMQPSVA), 403-450 (PVAA…LMKM), and 809-844 (PIDRVDGTSSGGISSSGSKPDSSMGATAASQDQEPG). Residues 7-20 (QPPPPPPLPPPPSS) are compositionally biased toward pro residues. Residues 86–98 (SEREPNKKEEKAA) show a composition bias toward basic and acidic residues. The span at 100–111 (KTPSQLKTGSGK) shows a compositional bias: polar residues. The SANT domain maps to 109-173 (SGKTTWTNVE…HYYQTYHKIC (65 aa)). Positions 410 to 425 (LRTESGSEKRSPETKK) are enriched in basic and acidic residues. Low complexity predominate over residues 815-833 (GTSSGGISSSGSKPDSSMG).

Belongs to the cramped family.

It is found in the nucleus. In terms of biological role, polycomb group (Pc-G) genes are needed to maintain expression patterns of the homeotic selector genes of the Antennapedia (Antp-C) and Bithorax (Bx-C) complexes, and hence for the maintenance of segmental determination. Can act as a modifier of position effect variegation (PEV). This is Protein cramped (crm) from Drosophila sechellia (Fruit fly).